A 393-amino-acid polypeptide reads, in one-letter code: Sex hormone-binding globulin (393 aa).

The first 27 residues, M1–Q27, serve as a signal peptide directing secretion. 2 consecutive Laminin G-like domains span residues V35–C208 and G215–C381. Intrachain disulfides connect C183-C208 and C353-C381. N371 and N387 each carry an N-linked (GlcNAc...) asparagine glycan.

As to quaternary structure, homodimer.

The protein resides in the secreted. Functionally, functions as an androgen transport protein, but may also be involved in receptor mediated processes. Each dimer binds one molecule of steroid. Specific for 5-alpha-dihydrotestosterone, testosterone, and 17-beta-estradiol. Regulates the plasma metabolic clearance rate of steroid hormones by controlling their plasma concentration. In Crocuta crocuta (Spotted hyena), this protein is Sex hormone-binding globulin (SHBG).